Consider the following 458-residue polypeptide: Na(+)/H(+) antiporter NhaA (458 aa).

The next 12 helical transmembrane spans lie at 27-47 (FLHVEAFSGIVLLLAAAAALI), 78-98 (LHFWVNDALMTVFFLVAGMEI), 114-134 (ILPIVSAIGGVCFPALIYLSF), 143-163 (GWAVPTATDIAFALGILALLG), 172-192 (VILLSLAIIDDIIAVLIIAFF), 201-221 (GLAIAIAGIALVLFFQWIGLA), 222-242 (SAWLYILPGAIIWWGLMITGV), 249-269 (VILGMMTPVFPTRTLVAPLTI), 316-336 (PWVAYGVMPIFAFANAGVSFA), 346-366 (FLVVLSVVIGLFIGKPLGIIT), 388-408 (ILLIGFLAGIGFTMSIFVSML), and 421-441 (IGVLCGSGLSALAGLGYGLIY).

The protein belongs to the NhaA Na(+)/H(+) (TC 2.A.33) antiporter family.

The protein resides in the cell inner membrane. The enzyme catalyses Na(+)(in) + 2 H(+)(out) = Na(+)(out) + 2 H(+)(in). Its function is as follows. Na(+)/H(+) antiporter that extrudes sodium in exchange for external protons. This chain is Na(+)/H(+) antiporter NhaA, found in Bartonella quintana (strain Toulouse) (Rochalimaea quintana).